A 621-amino-acid polypeptide reads, in one-letter code: MPSADGSSSARPNGTSSRSDQLAWYKSQYEQLEAELADFQASSRELEAELEKDIEASEKRERLLKEKVDSLKYEVEEWKVRLEFTTFIADDGPRANLSLPRQTKYKQSKAEGNSAQNTLQKEITTLRDANRTLQLKLRDIEVANDDYERQARHTTSSLEDLESKYNVAIERAVLLEEEMRAGEQEREKLRIENQRLRDELSDLKIETEIIHEKLRNAELQNSRRRKPISLRSPSTPQTPDLFNRSPASSIVSSPLFSTPTLKTSLMSATATPPSPPISESSSSLRKSMNAMPGFPLQKASASDSSFGSRSLHGSRTQKHNNHSRATSYAFTSNRPTPSVTNRPGLPKPKPKPNENTNKHNNNARSSGLPKSGSLYQIRGLIGKMQKLEERVQSAKSKLPPPSDSPSRTSSRSGSILGESPVASTITARRNSRKRLSGSSFSSSVRDGDSVPSYAPHSRPSFGARTQGDSRPSSRTSYSSHSSVSHSTHPSVTPSTRPESRQSRTKTPLGHYSTNPTTESRRPRSSLSNPSNQNGVVNGMAHIDEDEDLAMHMSLRARISEIRETRLPSISTPTGLKKRTPSGISGIPAPRTLRTSTGFDRLEGDMGPPERKSNITDLGETY.

Polar residues-rich tracts occupy residues 1 to 20 and 231 to 263; these read MPSA…SRSD and RSPS…TLKT. Disordered stretches follow at residues 1–21, 218–372, 389–537, and 569–621; these read MPSA…RSDQ, ELQN…PKSG, ERVQ…GVVN, and ISTP…GETY. The stretch at 18–219 forms a coiled coil; that stretch reads RSDQLAWYKS…IHEKLRNAEL (202 aa). 2 stretches are compositionally biased toward low complexity: residues 264-288 and 300-310; these read SLMS…RKSM and SASDSSFGSRS. Residues 323 to 341 are compositionally biased toward polar residues; it reads SRATSYAFTSNRPTPSVTN. Low complexity-rich tracts occupy residues 353-362, 404-414, and 469-496; these read NENTNKHNNN, SPSRTSSRSGS, and SRPS…PSTR. Residues 599–613 show a composition bias toward basic and acidic residues; the sequence is DRLEGDMGPPERKSN.

The protein belongs to the nudE family. As to quaternary structure, self-associates. Interacts with nudF.

It is found in the cytoplasm. Its subcellular location is the cytoskeleton. Functionally, required for nuclear migration within hyphae during vegetative growth. In Aspergillus fumigatus (strain ATCC MYA-4609 / CBS 101355 / FGSC A1100 / Af293) (Neosartorya fumigata), this protein is Nuclear distribution protein nudE homolog 1 (nde1).